The chain runs to 381 residues: KRR1 small subunit processome component homolog (381 aa).

The interval 1 to 51 (MASPSLERPEKGAGKSEFRNQKPKPENQDESELLTVPDGWKEPAFSKEDNP) is disordered. Alanine 2 carries the post-translational modification N-acetylalanine. 2 positions are modified to phosphoserine: serine 3 and serine 5. Basic and acidic residues-rich tracts occupy residues 7 to 27 (ERPE…KPEN) and 39 to 51 (GWKE…EDNP). Residue lysine 24 forms a Glycyl lysine isopeptide (Lys-Gly) (interchain with G-Cter in SUMO2) linkage. The KH domain occupies 154-206 (KERFVKRRQRLIGPKGSTLKALELLTNCYIMVQGNTVSAIGPFSGLKEVRKVV). Residues 250–262 (NVNKRKEPKKKTV) show a composition bias toward basic residues. Disordered regions lie at residues 250 to 278 (NVNK…ESQI) and 309 to 338 (AISK…ASTE). Glycyl lysine isopeptide (Lys-Gly) (interchain with G-Cter in SUMO2) cross-links involve residues lysine 340 and lysine 369.

The protein belongs to the KRR1 family. Part of the small subunit (SSU) processome, composed of more than 70 proteins and the RNA chaperone small nucleolar RNA (snoRNA) U3. In terms of assembly, (Microbial infection) Directly interacts with HIV-1 protein VPR. Also identified in a complex with NR3C1 and HIV-1 protein VPR.

Its subcellular location is the nucleus. The protein localises to the nucleolus. It is found in the cytoplasm. In terms of biological role, part of the small subunit (SSU) processome, first precursor of the small eukaryotic ribosomal subunit. During the assembly of the SSU processome in the nucleolus, many ribosome biogenesis factors, an RNA chaperone and ribosomal proteins associate with the nascent pre-rRNA and work in concert to generate RNA folding, modifications, rearrangements and cleavage as well as targeted degradation of pre-ribosomal RNA by the RNA exosome. This Homo sapiens (Human) protein is KRR1 small subunit processome component homolog.